Here is a 464-residue protein sequence, read N- to C-terminus: tRNA modification GTPase MnmE (464 aa).

The (6S)-5-formyl-5,6,7,8-tetrahydrofolate site is built by arginine 27, glutamate 90, and lysine 129. Residues 222–384 (GIALVLAGSV…LYDKIRSLTC (163 aa)) enclose the TrmE-type G domain. Residues 232–237 (NVGKSS), 251–257 (SSYAGTT), and 276–279 (DTAG) each bind GTP. Residues serine 236 and threonine 257 each coordinate Mg(2+). Lysine 464 serves as a coordination point for (6S)-5-formyl-5,6,7,8-tetrahydrofolate.

This sequence belongs to the TRAFAC class TrmE-Era-EngA-EngB-Septin-like GTPase superfamily. TrmE GTPase family. Homodimer. Heterotetramer of two MnmE and two MnmG subunits. K(+) is required as a cofactor.

It localises to the cytoplasm. Functionally, exhibits a very high intrinsic GTPase hydrolysis rate. Involved in the addition of a carboxymethylaminomethyl (cmnm) group at the wobble position (U34) of certain tRNAs, forming tRNA-cmnm(5)s(2)U34. In Borrelia turicatae (strain 91E135), this protein is tRNA modification GTPase MnmE.